The chain runs to 201 residues: Peptidyl-tRNA hydrolase (201 aa).

Tyrosine 14 contributes to the tRNA binding site. Histidine 19 serves as the catalytic Proton acceptor. TRNA is bound by residues tyrosine 64, asparagine 66, and asparagine 112.

It belongs to the PTH family. As to quaternary structure, monomer.

It localises to the cytoplasm. The enzyme catalyses an N-acyl-L-alpha-aminoacyl-tRNA + H2O = an N-acyl-L-amino acid + a tRNA + H(+). Functionally, hydrolyzes ribosome-free peptidyl-tRNAs (with 1 or more amino acids incorporated), which drop off the ribosome during protein synthesis, or as a result of ribosome stalling. Its function is as follows. Catalyzes the release of premature peptidyl moieties from peptidyl-tRNA molecules trapped in stalled 50S ribosomal subunits, and thus maintains levels of free tRNAs and 50S ribosomes. In Bradyrhizobium sp. (strain ORS 278), this protein is Peptidyl-tRNA hydrolase.